We begin with the raw amino-acid sequence, 1004 residues long: Polyhomeotic-like protein 1 (1004 aa).

Low complexity predominate over residues 1–22; that stretch reads METESEQNSNSTNGSSSSGGSS. Disordered regions lie at residues 1-24, 212-241, 261-355, 432-512, 556-589, and 636-672; these read METE…SSRP, NQQA…SSLS, SLNL…NLTR, QQQQ…QLGA, RGMP…PPTL, and TLAV…SPKV. The segment covering 212–228 has biased composition (polar residues); that stretch reads NQQASAQGPQMQGSTQK. Over residues 279–303 the composition is skewed to gly residues; it reads MGPGGGGQAHGGLGQLPSSGMGGGS. Composition is skewed to polar residues over residues 319-329 and 344-355; these read QTVTVSQGSQT and SGQQNVGMNLTR. Low complexity predominate over residues 432–447; the sequence is QQQQQQQQPQATTLTA. Residues 448–458 are compositionally biased toward pro residues; the sequence is PQPPQVPPTQQ. Positions 459–482 are enriched in low complexity; sequence VPPSQSQQQAQTLVVQPMLQSSPL. Positions 483–495 are enriched in pro residues; sequence SLPPDAAPKPPIP. The segment covering 566-583 has biased composition (low complexity); it reads QAHLASSPPSSQAPGALQ. Ser-645 is modified (phosphoserine). A Glycyl lysine isopeptide (Lys-Gly) (interchain with G-Cter in SUMO2) cross-link involves residue Lys-763. The FCS-type zinc finger occupies 791–825; sequence LDKKANLLKCEYCGKYAPAEQFRGSKRFCSMTCAK. Zn(2+) contacts are provided by Cys-800, Cys-803, Cys-819, and Cys-823. A disordered region spans residues 848–928; it reads ANYARVRRRG…APPTPELHGI (81 aa). Residue Ser-898 is modified to Phosphoserine. The residue at position 922 (Thr-922) is a Phosphothreonine. One can recognise an SAM domain in the interval 940–1004; the sequence is WSVEEVYEFI…CAKINVLKET (65 aa).

Homodimer. Component of a PRC1-like complex. Interacts with RNF2 and CBX7. Interacts with PHC2, PHC2 and BMI1.

It localises to the nucleus. Component of a Polycomb group (PcG) multiprotein PRC1-like complex, a complex class required to maintain the transcriptionally repressive state of many genes, including Hox genes, throughout development. PcG PRC1 complex acts via chromatin remodeling and modification of histones; it mediates monoubiquitination of histone H2A 'Lys-119', rendering chromatin heritably changed in its expressibility. Required for proper control of cellular levels of GMNN expression. In Homo sapiens (Human), this protein is Polyhomeotic-like protein 1 (PHC1).